The sequence spans 540 residues: Suppressor of tumorigenicity 7 protein-like (540 aa).

A run of 4 helical transmembrane segments spans residues 24–44, 68–88, 475–495, and 502–522; these read WSWT…VYVL, FYVA…IFEW, LPFF…LAML, and LMGV…GFFA.

It belongs to the ST7 family.

Its subcellular location is the membrane. The polypeptide is Suppressor of tumorigenicity 7 protein-like (st7l) (Danio rerio (Zebrafish)).